A 494-amino-acid polypeptide reads, in one-letter code: UDP-glucose 6-dehydrogenase (494 aa).

NAD(+) is bound by residues 11-16 (GAGYVG), D36, R41, 89-93 (VNTPT), and 130-132 (STV). A disordered region spans residues 88–110 (SVNTPTKTYGMGKGRAADLKYIE). The allosteric switch region stretch occupies residues 129-135 (KSTVPVR). The active-site Proton donor/acceptor is E161. Substrate-binding positions include 161 to 165 (EFLAE), 220 to 224 (KLAAN), R260, and 267 to 273 (KASVGFG). An NAD(+)-binding site is contributed by E165. Catalysis depends on K220, which acts as the Proton donor/acceptor. C276 serves as the catalytic Nucleophile. 276–279 (CFQK) contributes to the NAD(+) binding site. Residues 321–325 (SLFNT) are important for formation of active hexamer structure. 338 to 339 (FK) serves as a coordination point for substrate. R346 provides a ligand contact to NAD(+). Residue R442 participates in substrate binding. Residues 466–494 (VSAKRIPFASSCEIPKFSLQDPPVKKPRV) form a disordered region.

Belongs to the UDP-glucose/GDP-mannose dehydrogenase family. As to quaternary structure, homohexamer.

The catalysed reaction is UDP-alpha-D-glucose + 2 NAD(+) + H2O = UDP-alpha-D-glucuronate + 2 NADH + 3 H(+). Its pathway is nucleotide-sugar biosynthesis; UDP-alpha-D-glucuronate biosynthesis; UDP-alpha-D-glucuronate from UDP-alpha-D-glucose: step 1/1. Its activity is regulated as follows. UDP-alpha-D-xylose (UDX) acts as a feedback inhibitor. It binds at the same site as the substrate, but functions as allosteric inhibitor by triggering a conformation change that disrupts the active hexameric ring structure and gives rise to an inactive, horseshoe-shaped hexamer. Functionally, catalyzes the formation of UDP-alpha-D-glucuronate, a constituent of complex glycosaminoglycans. Required for the biosynthesis of chondroitin sulfate and heparan sulfate. Required for embryonic development via its role in the biosynthesis of glycosaminoglycans. The sequence is that of UDP-glucose 6-dehydrogenase (UGDH) from Gallus gallus (Chicken).